A 273-amino-acid polypeptide reads, in one-letter code: 2,3,4,5-tetrahydropyridine-2,6-dicarboxylate N-succinyltransferase (273 aa).

Positions 104 and 141 each coordinate substrate.

This sequence belongs to the transferase hexapeptide repeat family. As to quaternary structure, homotrimer.

Its subcellular location is the cytoplasm. The enzyme catalyses (S)-2,3,4,5-tetrahydrodipicolinate + succinyl-CoA + H2O = (S)-2-succinylamino-6-oxoheptanedioate + CoA. The protein operates within amino-acid biosynthesis; L-lysine biosynthesis via DAP pathway; LL-2,6-diaminopimelate from (S)-tetrahydrodipicolinate (succinylase route): step 1/3. This chain is 2,3,4,5-tetrahydropyridine-2,6-dicarboxylate N-succinyltransferase, found in Chromobacterium violaceum (strain ATCC 12472 / DSM 30191 / JCM 1249 / CCUG 213 / NBRC 12614 / NCIMB 9131 / NCTC 9757 / MK).